Reading from the N-terminus, the 234-residue chain is UPF0758 protein Rfer_3252 (234 aa).

The MPN domain occupies 112-234 (IFATPDAVKH…ALSMAERGLL (123 aa)). His183, His185, and Asp196 together coordinate Zn(2+). Positions 183–196 (HNHPSGTVQPSRAD) match the JAMM motif motif.

This sequence belongs to the UPF0758 family.

The chain is UPF0758 protein Rfer_3252 from Albidiferax ferrireducens (strain ATCC BAA-621 / DSM 15236 / T118) (Rhodoferax ferrireducens).